Here is a 124-residue protein sequence, read N- to C-terminus: uncharacterized protein (124 aa).

Residues 70–90 (LLYLALVLLLVVILSTAFFSI) traverse the membrane as a helical segment.

Its subcellular location is the membrane. This is an uncharacterized protein from Saccharomyces cerevisiae (strain ATCC 204508 / S288c) (Baker's yeast).